The primary structure comprises 182 residues: Ribulose bisphosphate carboxylase small subunit, chloroplastic (182 aa).

Residues 1-58 (MACSMISSATVAAVSRASPAQSSMVAPFTCLKSTSAFPVTQKTNNDITSIASNGGRVQ) constitute a chloroplast transit peptide.

The protein belongs to the RuBisCO small chain family. Heterohexadecamer of 8 large and 8 small subunits.

The protein resides in the plastid. It is found in the chloroplast. Functionally, ruBisCO catalyzes two reactions: the carboxylation of D-ribulose 1,5-bisphosphate, the primary event in carbon dioxide fixation, as well as the oxidative fragmentation of the pentose substrate. Both reactions occur simultaneously and in competition at the same active site. Although the small subunit is not catalytic it is essential for maximal activity. This Betula pendula (European white birch) protein is Ribulose bisphosphate carboxylase small subunit, chloroplastic.